The primary structure comprises 686 residues: Lysophospholipase 3 (686 aa).

Positions 1–26 (MIRPLCSKIIISYIFAISQFLLAANA) are cleaved as a signal peptide. Residues 39 to 592 (SCPDDINLVR…KNYCWNGTLD (554 aa)) enclose the PLA2c domain. 14 N-linked (GlcNAc...) asparagine glycosylation sites follow: Asn-56, Asn-82, Asn-129, Asn-166, Asn-221, Asn-283, Asn-313, Asn-351, Asn-495, Asn-519, Asn-547, Asn-571, Asn-588, and Asn-614. Asn-659 is lipidated: GPI-anchor amidated asparagine. Residues 660–686 (SGSHLSGISVKFSAMIMLTLLMFTGAV) constitute a propeptide, removed in mature form.

This sequence belongs to the lysophospholipase family.

The protein resides in the cell membrane. It catalyses the reaction a 1-acyl-sn-glycero-3-phosphocholine + H2O = sn-glycerol 3-phosphocholine + a fatty acid + H(+). Its function is as follows. Sequentially removes both fatty acyl groups from diacylglycerophospholipids and therefore has both phospholipase A and lysophospholipase activities. Substrate preference is phosphatidylserine &gt; phosphatidylinositol. Does not cleave phosphatidylcholine, phosphatidylethanolamine, phosphatidic acid and phosphatidylinositol-bisphosphate. Mainly responsible for the degradation of phosphatidylinositol in vivo. The sequence is that of Lysophospholipase 3 (PLB3) from Saccharomyces cerevisiae (strain ATCC 204508 / S288c) (Baker's yeast).